The primary structure comprises 1706 residues: PR domain zinc finger protein 2 (1706 aa).

In terms of domain architecture, SET spans 27–140 (EEVRLFPSAV…PGEELLVWYN (114 aa)). The segment at 154–342 (ERASARSKRS…TPPPHTPRAR (189 aa)) is disordered. A compositionally biased stretch (basic residues) spans 158–183 (ARSKRSSPKSRRGKKKSHENKNKGIR). A compositionally biased stretch (polar residues) spans 185 to 199 (HPTQLKASELDSTFA). Residues 258 to 294 (TDCEVNDVEEEELEEEEELEEEEEEELGEDGVEEADM) show a composition bias toward acidic residues. Over residues 299–313 (SAKEPEIRCEEKPED) the composition is skewed to basic and acidic residues. C2H2-type zinc fingers lie at residues 355–377 (FPCQHCERKFATKQGLERHMHIH) and 385–407 (FKCKYCGKRFGTQINRRRHERRH). Disordered regions lie at residues 400–446 (RRRH…QLGQ), 492–542 (RRHQ…EEEG), and 618–655 (LLKDSPSSTNCESKKRRTASPPVLPKIKTETESDSTAP). S416 bears the Phosphoserine mark. Positions 427-439 (DGKGENVTSKDES) are enriched in basic and acidic residues. The C2H2-type 3 zinc finger occupies 476-499 (HPCKYCKKVFGTHTNMRRHQRRVH). S637 carries the post-translational modification Phosphoserine. Residues K645, K684, and K686 each participate in a glycyl lysine isopeptide (Lys-Gly) (interchain with G-Cter in SUMO2) cross-link. 3 disordered regions span residues 724 to 794 (TSSR…SPPC), 823 to 1075 (SGVK…SSVV), and 1088 to 1112 (VTFKQEESESEGLKPKEEAPPAGGQ). The segment covering 733–743 (SSPPSSPQHSP) has biased composition (low complexity). S738 is subject to Phosphoserine. K769 participates in a covalent cross-link: Glycyl lysine isopeptide (Lys-Gly) (interchain with G-Cter in SUMO2). A phosphoserine mark is found at S776, S780, and S791. Over residues 823 to 832 (SGVKQKSEGT) the composition is skewed to polar residues. Residues 846-863 (SVHKKPCDSEGKEFKENH) show a composition bias toward basic and acidic residues. Glycyl lysine isopeptide (Lys-Gly) (interchain with G-Cter in SUMO2) cross-links involve residues K860 and K870. Polar residues-rich tracts occupy residues 891–912 (SLPTETTPEVTRSPSPCKSPDT) and 943–952 (LQTASLSSGQ). The span at 962 to 983 (PSSPPPCPPVLTVATPPPPLLP) shows a compositional bias: pro residues. Residues 993–1009 (DASPQQCPSPFSNTTAQ) show a composition bias toward polar residues. Low complexity predominate over residues 1010–1019 (SPLPILSPTV). Positions 1020–1030 (SPSPSPIPPVE) are enriched in pro residues. A compositionally biased stretch (low complexity) spans 1034-1062 (SAASPGPPTLSSSSSSSSSFPSSSCSSTS). Positions 1091–1106 (KQEESESEGLKPKEEA) are enriched in basic and acidic residues. 3 C2H2-type zinc fingers span residues 1123-1145 (FICNVCESPFLSIKDLTKHLSVH), 1151-1174 (FKCEFCVQLFKVKTDLSEHRFLLH), and 1180-1203 (FVCSVCKKEFAFLCNLQQHQRDLH). Residues K1136 and K1140 each participate in a glycyl lysine isopeptide (Lys-Gly) (interchain with G-Cter in SUMO2) cross-link. Over residues 1218–1227 (LRPQNFTDPS) the composition is skewed to polar residues. The tract at residues 1218–1251 (LRPQNFTDPSKANVEHMPSLPEEPLETSREEELN) is disordered. A Glycyl lysine isopeptide (Lys-Gly) (interchain with G-Cter in SUMO2) cross-link involves residue K1269. The C2H2-type 7; atypical zinc finger occupies 1321 to 1343 (IRCTKCGKGVDNMPELHKHILAC). The C2H2-type 8; atypical zinc-finger motif lies at 1443 to 1465 (HICPYCDREFTYIGSLNKHAAFS). The tract at residues 1466-1563 (CPKKPLSPSK…KKASSSSLRN (98 aa)) is disordered. The segment covering 1474–1486 (SKRKVSHSSKKGG) has biased composition (basic residues). A compositionally biased stretch (low complexity) spans 1487 to 1498 (HASSSSSDRNSS). Residues 1528-1544 (GPAQASLPSSSFRSRQN) show a composition bias toward polar residues. A compositionally biased stretch (low complexity) spans 1548–1563 (AASVKSKKASSSSLRN).

This sequence belongs to the class V-like SAM-binding methyltransferase superfamily. Binds to the retinoblastoma protein (RB). Interacts with GATA3.

It localises to the nucleus. It catalyses the reaction L-lysyl-[histone] + S-adenosyl-L-methionine = N(6)-methyl-L-lysyl-[histone] + S-adenosyl-L-homocysteine + H(+). It carries out the reaction L-lysyl(9)-[histone H3] + 3 S-adenosyl-L-methionine = N(6),N(6),N(6)-trimethyl-L-lysyl(9)-[histone H3] + 3 S-adenosyl-L-homocysteine + 3 H(+). Functionally, S-adenosyl-L-methionine-dependent histone methyltransferase that specifically methylates 'Lys-9' of histone H3. May function as a DNA-binding transcription factor. Binds to the macrophage-specific TPA-responsive element (MTE) of the HMOX1 (heme oxygenase 1) gene and may act as a transcriptional activator of this gene. The protein is PR domain zinc finger protein 2 (Prdm2) of Rattus norvegicus (Rat).